Reading from the N-terminus, the 132-residue chain is MDSRTGESITVAQAENSVFIWEVPNPLYFRIQRVEDPLYTRTRIYHIQVRFNHNLRKALDLRKAYFNFQVWTTSMRASGPTYLSRFKCLVMSHLDNLGVIGINHVIRAVRFATDRSYVTHVHENHVINFKIY.

This sequence belongs to the geminiviridae replication enhancer protein family. Homooligomer. Interacts with the replication-associated protein (REP). Interacts with host proliferating cell nuclear antigen (PCNA). Interacts with host retinoblastoma-related protein 1 (RBR1), and may thereby deregulate the host cell cycle. Oligomerization and interaction with PCNA are necessary for optimal replication enhancement.

Its function is as follows. Increases viral DNA accumulation. Enhances infectivity and symptom expression. In Cabbage leaf curl virus (isolate Jamaica) (CaLCuV), this protein is Replication enhancer protein.